The sequence spans 89 residues: MKFSLATIALAAAVVASPTNPPTEAGSCNVKGKTGNVTCCNSAIPILGQLLCNVLASGTCNSGQSAYCCDTGGNTGLIVVQAVNCVELL.

The N-terminal stretch at methionine 1 to alanine 16 is a signal peptide. Cystine bridges form between cysteine 28/cysteine 68, cysteine 39/cysteine 60, cysteine 40/cysteine 52, and cysteine 69/cysteine 85. Asparagine 36 carries an N-linked (GlcNAc...) asparagine glycan.

It belongs to the fungal hydrophobin family.

Its subcellular location is the secreted. The protein resides in the cell wall. The protein localises to the vacuole. It is found in the cytoplasmic vesicle. In terms of biological role, aerial growth, conidiation, and dispersal of filamentous fungi in the environment rely upon a capability of their secreting small amphipathic proteins called hydrophobins (HPBs) with low sequence identity. Class I can self-assemble into an outermost layer of rodlet bundles on aerial cell surfaces, conferring cellular hydrophobicity that supports fungal growth, development and dispersal; whereas Class II form highly ordered films at water-air interfaces through intermolecular interactions but contribute nothing to the rodlet structure. Hyd1D contributes to certain cell wall-related features, such as hydrophobicity but is not involved in cell wall-related events during fungal proliferation in host hemocoel. Does not contribute to conidial hydrophobicity. Involved in insect hemocoel colonization independent of cell hydrophobicity. The sequence is that of Class I hydrophobin D from Beauveria bassiana (strain ARSEF 2860) (White muscardine disease fungus).